A 458-amino-acid polypeptide reads, in one-letter code: Estrogen-related receptor gamma (458 aa).

A Glycyl lysine isopeptide (Lys-Gly) (interchain with G-Cter in SUMO) cross-link involves residue K40. Residues 42-52 (EPSSPASLTDS) show a composition bias toward polar residues. A disordered region spans residues 42-85 (EPSSPASLTDSVNHHSPGGSSDASGSYSSTMNGHQNGLDSPPLY). S45 carries the phosphoserine modification. Residues 57–70 (SPGGSSDASGSYSS) are compositionally biased toward low complexity. A DNA-binding region (nuclear receptor) is located at residues 125–200 (KRLCLVCGDI…VGMLKEGVRL (76 aa)). NR C4-type zinc fingers lie at residues 128–148 (CLVCGDIASGYHYGVASCEAC) and 164–188 (CPATNECEITKRRRKSCQACRFMKC). The region spanning 233 to 457 (PYNKIVSHLL…KLFLEMLEAK (225 aa)) is the NR LBD domain.

It belongs to the nuclear hormone receptor family. NR3 subfamily. Homodimer. Binds TLE1, PNRC1 and PNRC2. Binds GRIP1. Interacts with NRIP1, NCOA1 and NCOR2. Post-translationally, acetylated by PCAF/KAT2 (in vitro). Sumoylation on Lys-40 is enhanced by phosphorylation at Ser-45 and represses transcriptional activity. In terms of processing, phosphorylation on Ser-45 enhances sumoylation on Lys-40 thus repressing transcriptional activity. In terms of tissue distribution, expressed in the heart, kidney, brain, lung, bone marrow, adrenal gland, trachea, spinal cord and thyroid gland.

It localises to the nucleus. Its function is as follows. Orphan receptor that acts as a transcription activator in the absence of bound ligand. Binds specifically to an estrogen response element and activates reporter genes controlled by estrogen response elements. Induces the expression of PERM1 in the skeletal muscle. This chain is Estrogen-related receptor gamma (ESRRG), found in Homo sapiens (Human).